A 393-amino-acid chain; its full sequence is MANIDNKEQTELDQQDMEDVEDVEEEETGEEANSKARQLTAQMMQNPQVLAALQERLDDLVGTPTGYIESLPKVVKRRVNALKNLQVKCAQIEAKFYEEVHELERKYAALYQPFFEKRSDIINASYEPTEEECEWKVDEEEDIAEDLKEKAKLEEEKKDEEKEDPKGIPEFWLTVFKNVDLLSDMVQEHDEPILKHLKDIKVKFSEAGQPMNFMLEFHFEPNEFFTNELLTKTYKMRSEPDESDPFSFDGPEIMGCTGCLIDWKKGKNVTLKTIKKKQKHKGRGTVRTVTKTVPNDSFFNFFSPPEVPENGELDDDAEAILTADFEIGHFLRERIIPRSVLYFTGEAIEDDDDDYDEEGEEADDEEGEEEADEDHDPDFDPKKAQNPAECKQQ.

Over residues 1 to 10 (MANIDNKEQT) the composition is skewed to basic and acidic residues. The tract at residues 1–38 (MANIDNKEQTELDQQDMEDVEDVEEEETGEEANSKARQ) is disordered. A compositionally biased stretch (acidic residues) spans 11-30 (ELDQQDMEDVEDVEEEETGE). Residues 126–151 (YEPTEEECEWKVDEEEDIAEDLKEKA) carry the NAP1L motif motif. A Nuclear localization signal motif is present at residues 274 to 280 (IKKKQKH). Positions 347–377 (AIEDDDDDYDEEGEEADDEEGEEEADEDHDP) are enriched in acidic residues. Positions 347–393 (AIEDDDDDYDEEGEEADDEEGEEEADEDHDPDFDPKKAQNPAECKQQ) are disordered.

The protein belongs to the nucleosome assembly protein (NAP) family. As to quaternary structure, forms homomultimers. Interacts with histone b4. Interacts with the B-type cyclins ccnb1 and ccnb2. Post-translationally, phosphorylated by cyclin B-cdc2 kinase complexes.

The protein resides in the cytoplasm. It localises to the nucleus. In terms of biological role, acts as a chaperone for the linker histone to facilitate deposition of histone B4 onto linker DNA. Required for both remodeling of sperm chromatin into nucleosomes, and linker histone binding to nucleosome core dimers. Plays a role in tissue-specific gene regulation. Required for primitive hemopoiesis, acting upstream of tal1/scl. In Xenopus laevis (African clawed frog), this protein is Nucleosome assembly protein 1-like 1-B (nap1l1-b).